The chain runs to 204 residues: Holliday junction branch migration complex subunit RuvA (204 aa).

The tract at residues 1–64 (MIGKLKGTID…EDQLKLFGFM (64 aa)) is domain I. Positions 65–143 (TALEREWFNL…AYAGEAINIA (79 aa)) are domain II. The segment at 144 to 151 (LKRELGEG) is flexible linker. A domain III region spans residues 152-204 (VAAAPVADAVSALTNLGYSRDQAANAVAAAMKTAGEGADSAKLIRLGLKELAR).

This sequence belongs to the RuvA family. As to quaternary structure, homotetramer. Forms an RuvA(8)-RuvB(12)-Holliday junction (HJ) complex. HJ DNA is sandwiched between 2 RuvA tetramers; dsDNA enters through RuvA and exits via RuvB. An RuvB hexamer assembles on each DNA strand where it exits the tetramer. Each RuvB hexamer is contacted by two RuvA subunits (via domain III) on 2 adjacent RuvB subunits; this complex drives branch migration. In the full resolvosome a probable DNA-RuvA(4)-RuvB(12)-RuvC(2) complex forms which resolves the HJ.

The protein resides in the cytoplasm. The RuvA-RuvB-RuvC complex processes Holliday junction (HJ) DNA during genetic recombination and DNA repair, while the RuvA-RuvB complex plays an important role in the rescue of blocked DNA replication forks via replication fork reversal (RFR). RuvA specifically binds to HJ cruciform DNA, conferring on it an open structure. The RuvB hexamer acts as an ATP-dependent pump, pulling dsDNA into and through the RuvAB complex. HJ branch migration allows RuvC to scan DNA until it finds its consensus sequence, where it cleaves and resolves the cruciform DNA. This chain is Holliday junction branch migration complex subunit RuvA, found in Rhizobium etli (strain ATCC 51251 / DSM 11541 / JCM 21823 / NBRC 15573 / CFN 42).